The chain runs to 571 residues: RNA polymerase sigma factor SigA (571 aa).

The tract at residues 321–391 is sigma-70 factor domain-2; that stretch reads MVESNLRLVI…TRAIADQART (71 aa). An Interaction with polymerase core subunit RpoC motif is present at residues 345 to 348; that stretch reads DLIQ. The sigma-70 factor domain-3 stretch occupies residues 400-476; the sequence is ETINKVLRGA…DTAVESPAEA (77 aa). Residues 489–542 form a sigma-70 factor domain-4 region; that stretch reads VLKTLTDRERFVLIHRFGLLDGRPKTLEEVGSAFNVTRERIRQIEAKALRKMRH. The segment at residues 515-534 is a DNA-binding region (H-T-H motif); the sequence is LEEVGSAFNVTRERIRQIEA.

This sequence belongs to the sigma-70 factor family. RpoD/SigA subfamily. As to quaternary structure, interacts transiently with the RNA polymerase catalytic core.

The protein resides in the cytoplasm. Sigma factors are initiation factors that promote the attachment of RNA polymerase to specific initiation sites and are then released. This sigma factor is the primary sigma factor during exponential growth. The polypeptide is RNA polymerase sigma factor SigA (Chlamydia trachomatis serovar D (strain ATCC VR-885 / DSM 19411 / UW-3/Cx)).